A 629-amino-acid polypeptide reads, in one-letter code: 1-deoxy-D-xylulose-5-phosphate synthase (629 aa).

Thiamine diphosphate contacts are provided by residues His-78 and 119–121 (AHS). Asp-150 contacts Mg(2+). Thiamine diphosphate is bound by residues 151 to 152 (GA), Asn-179, Tyr-286, and Glu-368. Position 179 (Asn-179) interacts with Mg(2+).

This sequence belongs to the transketolase family. DXPS subfamily. Homodimer. Requires Mg(2+) as cofactor. Thiamine diphosphate is required as a cofactor.

The enzyme catalyses D-glyceraldehyde 3-phosphate + pyruvate + H(+) = 1-deoxy-D-xylulose 5-phosphate + CO2. Its pathway is metabolic intermediate biosynthesis; 1-deoxy-D-xylulose 5-phosphate biosynthesis; 1-deoxy-D-xylulose 5-phosphate from D-glyceraldehyde 3-phosphate and pyruvate: step 1/1. Its function is as follows. Catalyzes the acyloin condensation reaction between C atoms 2 and 3 of pyruvate and glyceraldehyde 3-phosphate to yield 1-deoxy-D-xylulose-5-phosphate (DXP). The polypeptide is 1-deoxy-D-xylulose-5-phosphate synthase (Acidovorax sp. (strain JS42)).